Consider the following 445-residue polypeptide: Fatty acid desaturase 3 (445 aa).

Residues 1-21 are disordered; it reads MGGVGEPGPREGPAQPGAPLP. Residues 1-133 are Cytoplasmic-facing; the sequence is MGGVGEPGPR…DMKLFDASPT (133 aa). The 78-residue stretch at 20 to 97 folds into the Cytochrome b5 heme-binding domain; sequence LPTFCWEQIR…LQPLLIGELA (78 aa). Residues 134–154 form a helical membrane-spanning segment; it reads FFAFLLGHILAMEVLAWLLIY. The Lumenal portion of the chain corresponds to 155–159; it reads LLGPG. The chain crosses the membrane as a helical span at residues 160–180; it reads WVPSALAAFILAISQAQSWCL. The Cytoplasmic segment spans residues 181–263; it reads QHDLGHASIF…KRRYLPYNQQ (83 aa). Positions 182 to 186 match the Histidine box-1 motif; it reads HDLGH. The Histidine box-2 signature appears at 219–223; it reads HFQHH. A helical membrane pass occupies residues 264–284; the sequence is HLYFFLIGPPLLTLVNFEVEN. The Lumenal segment spans residues 285–306; the sequence is LAYMLVCMQWADLLWAASFYAR. The chain crosses the membrane as a helical span at residues 307–327; that stretch reads FFLSYLPFYGVPGVLLFFVAV. The Cytoplasmic portion of the chain corresponds to 328–445; that stretch reads RVLESHWFVW…DIWLDAYLHQ (118 aa). A Histidine box-3 motif is present at residues 383–387; it reads QIEHH.

Belongs to the fatty acid desaturase type 1 family. As to expression, highly expressed in various organs and tissues including liver, kidney, brain, lung, pancreas, testis, ovary and skeletal muscle (at protein level).

It localises to the endoplasmic reticulum membrane. It carries out the reaction an N-acylsphing-4-enine + 2 Fe(II)-[cytochrome b5] + O2 + 2 H(+) = an N-acyl-sphinga-4E,14Z-dienine + 2 Fe(III)-[cytochrome b5] + 2 H2O. The catalysed reaction is N-(hexanoyl)sphing-4-enine + 2 Fe(II)-[cytochrome b5] + O2 + 2 H(+) = N-hexanoyl-sphinga-4E,14Z-dienine + 2 Fe(III)-[cytochrome b5] + 2 H2O. The enzyme catalyses sphing-4-enine + 2 Fe(II)-[cytochrome b5] + O2 + 2 H(+) = sphinga-4E,14Z-dienine + 2 Fe(III)-[cytochrome b5] + 2 H2O. It catalyses the reaction (11E)-octadecenoyl-CoA + 2 Fe(II)-[cytochrome b5] + O2 + 2 H(+) = (11E,13Z)-octadecadienoyl-CoA + 2 Fe(III)-[cytochrome b5] + 2 H2O. It carries out the reaction N-acyl-1-deoxysphinganine + 2 Fe(II)-[cytochrome b5] + O2 + 2 H(+) = N-acyl-1-deoxysphing-14Z-enine + 2 Fe(III)-[cytochrome b5] + 2 H2O. The catalysed reaction is an N-acylsphinganine + 2 Fe(II)-[cytochrome b5] + O2 + 2 H(+) = an N-acylsphing-14Z-enine + 2 Fe(III)-[cytochrome b5] + 2 H2O. The protein operates within lipid metabolism; sphingolipid metabolism. It participates in lipid metabolism; polyunsaturated fatty acid biosynthesis. Functionally, mammals have different sphingoid bases that differ in their length and/or pattern of desaturation and hydroxyl groups. The predominant sphingoid base that comprises mammalian ceramides is sphing-4-enine (sphingosine or SPH) which has a trans (E) desaturation at carbon 4. FADS3 is a desaturase that introduces a cis (Z) double bond between carbon 14 and carbon 15 of the sphingoid base (also known as long chain base, LCB), producing LCBs such as sphinga-4,14-dienine (SPD, d18:2(4E,14Z)) from SPH. Prefers SPH-containing ceramides (N-acylsphing-4-enines) as substrates. Capable of metabolizing also the SPH in its free form. SPD ceramides occur widely in mammalian tissues and cells. Due to their unusual structure containing a cis double bond, SPD ceramides may have an opposite, negative role in lipid microdomain formation relative to conventional ceramides. Could be involved in the detoxification of 1-deoxy sphingolipids, by desaturating the cytotoxic 1-deoxysphinganine (1-deoxySA, m18:0), produced under pathological conditions, to 1-deoxysphingenine (1-deoxysphingosine, 1-deoxySO, m18:1). Although prefers SPH-containing ceramides (N-acylsphing-4-enines) as substrates, it also exhibits activity toward dihydrosphingosine-containing CERs (N-acylsphinganines) and produces 14Z-SPH-containing sphingolipids,which can be found in patients with DEGS1 mutations. Its desaturase mechanism involves an electron transfer facilitated by cytochrome b5. FADS3 also acts as a methyl-end fatty acyl coenzyme A (CoA) desaturase that introduces a cis double bond between the preexisting double bond and the terminal methyl group of the fatty acyl chain. Desaturates (11E)-octadecenoate (trans-vaccenoate, the predominant trans fatty acid in human milk) at carbon 13 to generate (11E,13Z)-octadecadienoate (also known as conjugated linoleic acid 11E,13Z-CLA). This Homo sapiens (Human) protein is Fatty acid desaturase 3.